The sequence spans 513 residues: OTU domain-containing protein 5-A (513 aa).

Disordered regions lie at residues 1 to 75 (MTIL…GGAG) and 99 to 136 (GPGH…DEYE). One can recognise an OTU domain in the interval 166–289 (FIIKQMKEDG…NIHYNSVVNP (124 aa)). A cys-loop region spans residues 171–177 (MKEDGAC). The active site involves D174. C177 acts as the Nucleophile in catalysis. The tract at residues 226–236 (KRKNNCHGNHI) is variable-loop. The tract at residues 277–282 (YHRNIH) is his-loop. H282 is an active-site residue. A disordered region spans residues 387 to 446 (LEEWSGRSPRQRSTAGSPEHPDLHAELCMKPPSPGAPLILGKPPSPCAPGPSNQMSTGAD).

Belongs to the peptidase C85 family.

The enzyme catalyses Thiol-dependent hydrolysis of ester, thioester, amide, peptide and isopeptide bonds formed by the C-terminal Gly of ubiquitin (a 76-residue protein attached to proteins as an intracellular targeting signal).. Its function is as follows. Deubiquitinating enzyme that may function as negative regulator of the innate immune system. Has peptidase activity towards 'Lys-48'- and 'Lys-63'-linked polyubiquitin chains. Can also cleave 'Lys-11'-linked ubiquitin chains (in vitro). The chain is OTU domain-containing protein 5-A (otud5-a) from Xenopus laevis (African clawed frog).